The primary structure comprises 34 residues: Chlorotoxin-like peptide AaCtx (34 aa).

4 disulfides stabilise this stretch: cysteine 2-cysteine 19, cysteine 5-cysteine 27, cysteine 16-cysteine 32, and cysteine 20-cysteine 34.

It belongs to the short scorpion toxin superfamily. Chloride channel inhibitor family. As to expression, expressed by the venom gland.

It is found in the secreted. Toxin with unknown function in healthy organisms. On glioma cells, interacts with chloride channels (probably ClC-3/CLCN3) and MMP2 at the surface of glioma cells. This complex is then internalized via caveolae, thus inhibiting the chloride channels necessary for cell shrinkage and tumor propagation. Inhibits migration and invasion of U87 glioma cells expressing CLCN3/ClC-3 voltage-gated chloride channels. The polypeptide is Chlorotoxin-like peptide AaCtx (Androctonus australis (Sahara scorpion)).